The primary structure comprises 132 residues: Small ribosomal subunit protein uS8 (132 aa).

Belongs to the universal ribosomal protein uS8 family. Part of the 30S ribosomal subunit. Contacts proteins S5 and S12.

In terms of biological role, one of the primary rRNA binding proteins, it binds directly to 16S rRNA central domain where it helps coordinate assembly of the platform of the 30S subunit. This chain is Small ribosomal subunit protein uS8, found in Geobacillus thermodenitrificans (strain NG80-2).